The chain runs to 429 residues: Adenylosuccinate synthetase (429 aa).

GTP-binding positions include 12-18 (GDEGKGK) and 40-42 (GHT). Aspartate 13 acts as the Proton acceptor in catalysis. Residues aspartate 13 and glycine 40 each coordinate Mg(2+). IMP contacts are provided by residues 13-16 (DEGK), 38-41 (NAGH), threonine 128, arginine 142, glutamine 223, threonine 238, and arginine 302. Catalysis depends on histidine 41, which acts as the Proton donor. Residue 298–304 (TVTGRPR) coordinates substrate. GTP-binding positions include arginine 304, 330–332 (LLD), and 412–414 (SVG).

This sequence belongs to the adenylosuccinate synthetase family. Homodimer. The cofactor is Mg(2+).

It localises to the cytoplasm. It carries out the reaction IMP + L-aspartate + GTP = N(6)-(1,2-dicarboxyethyl)-AMP + GDP + phosphate + 2 H(+). It functions in the pathway purine metabolism; AMP biosynthesis via de novo pathway; AMP from IMP: step 1/2. Its function is as follows. Plays an important role in the de novo pathway of purine nucleotide biosynthesis. Catalyzes the first committed step in the biosynthesis of AMP from IMP. The protein is Adenylosuccinate synthetase of Lactobacillus acidophilus (strain ATCC 700396 / NCK56 / N2 / NCFM).